Consider the following 150-residue polypeptide: Avidin-related protein 1 (150 aa).

The signal sequence occupies residues 1 to 24; the sequence is MVHATSPLLLLLLLSLALVAPGLS. Residues 26-147 form the Avidin-like domain; sequence RKCSLTGKWD…GNNDFTRQRT (122 aa). C28 and C105 are oxidised to a cystine. N36 and S40 together coordinate biotin. Residue N54 is glycosylated (N-linked (GlcNAc...) asparagine). Residues Y57, T59, and D63 each coordinate biotin. Residues N67 and N93 are each glycosylated (N-linked (GlcNAc...) asparagine). Positions 95, 99, and 140 each coordinate biotin.

This sequence belongs to the avidin/streptavidin family. As to quaternary structure, homotetramer. Glycosylated.

It localises to the secreted. Its function is as follows. Forms a strong non-covalent specific complex with biotin. The sequence is that of Avidin-related protein 1 (AVR1) from Gallus gallus (Chicken).